A 232-amino-acid polypeptide reads, in one-letter code: 7-cyano-7-deazaguanine synthase (232 aa).

7 to 17 (LSGGLDSTVVT) serves as a coordination point for ATP. 4 residues coordinate Zn(2+): Cys195, Cys206, Cys209, and Cys212.

This sequence belongs to the QueC family. Zn(2+) serves as cofactor.

It catalyses the reaction 7-carboxy-7-deazaguanine + NH4(+) + ATP = 7-cyano-7-deazaguanine + ADP + phosphate + H2O + H(+). It participates in purine metabolism; 7-cyano-7-deazaguanine biosynthesis. Catalyzes the ATP-dependent conversion of 7-carboxy-7-deazaguanine (CDG) to 7-cyano-7-deazaguanine (preQ(0)). This is 7-cyano-7-deazaguanine synthase from Methanocaldococcus jannaschii (strain ATCC 43067 / DSM 2661 / JAL-1 / JCM 10045 / NBRC 100440) (Methanococcus jannaschii).